Consider the following 197-residue polypeptide: Imidazoleglycerol-phosphate dehydratase (197 aa).

It belongs to the imidazoleglycerol-phosphate dehydratase family.

Its subcellular location is the cytoplasm. The enzyme catalyses D-erythro-1-(imidazol-4-yl)glycerol 3-phosphate = 3-(imidazol-4-yl)-2-oxopropyl phosphate + H2O. Its pathway is amino-acid biosynthesis; L-histidine biosynthesis; L-histidine from 5-phospho-alpha-D-ribose 1-diphosphate: step 6/9. In Nitrosococcus oceani (strain ATCC 19707 / BCRC 17464 / JCM 30415 / NCIMB 11848 / C-107), this protein is Imidazoleglycerol-phosphate dehydratase.